Here is a 289-residue protein sequence, read N- to C-terminus: Splicing factor C9orf78 homolog (289 aa).

Disordered stretches follow at residues M1–K30 and R85–E111. The interval G5 to V58 is interaction with SNRNP200. Residues S15 and S17 each carry the phosphoserine modification. A Phosphotyrosine modification is found at Y147. Over residues L232–K283 the composition is skewed to basic and acidic residues. The disordered stretch occupies residues L232–Y289. A Phosphothreonine modification is found at T253. A Phosphoserine modification is found at S261.

It belongs to the TLS1 family. As to quaternary structure, component of the spliceosome. Interacts with SNRNP200; the interaction is direct. Interacts with PRPF8.

The protein resides in the nucleus. The protein localises to the chromosome. It localises to the centromere. Its function is as follows. Plays a role in pre-mRNA splicing by promoting usage of the upstream 3'-splice site at alternative NAGNAG splice sites; these are sites featuring alternative acceptor motifs separated by only a few nucleotides. May also modulate exon inclusion events. PPlays a role in spliceosomal remodeling by displacing WBP4 from SNRNP200 and may act to inhibit SNRNP200 helicase activity. Binds U5 snRNA. Required for proper chromosome segregation. Not required for splicing of shelterin components. The polypeptide is Splicing factor C9orf78 homolog (Mus musculus (Mouse)).